A 299-amino-acid polypeptide reads, in one-letter code: Taste receptor type 2 member 1 (299 aa).

The Extracellular portion of the chain corresponds to 1–9 (MLESHLIIY). A helical transmembrane segment spans residues 10–30 (FLLAVIQFLLGIFTNGIIVVV). The Cytoplasmic portion of the chain corresponds to 31–55 (NGIDLIKHRKMAPLDLLLSCLAVSR). A helical transmembrane segment spans residues 56–76 (IFLQLFIFYVNVIVIFFIEFI). At 77–81 (MCSAN) the chain is on the extracellular side. A helical membrane pass occupies residues 82-102 (CAILLFVNELELWLATWLGVF). Residues 103 to 124 (YCAKVASVRHPLFIWLKMRISK) lie on the Cytoplasmic side of the membrane. Residues 125–145 (LVPWMILGSLLYVSMICVFHS) form a helical membrane-spanning segment. Residues 146–178 (KYAGFMVPHFLRNFFSQNATIQKEDTLAIQIFS) lie on the Extracellular side of the membrane. An N-linked (GlcNAc...) asparagine glycan is attached at N163. A helical membrane pass occupies residues 179–199 (FVAEFSVPLLIFLVAVLLLIF). The Cytoplasmic portion of the chain corresponds to 200-222 (SLGRHTRQMRNTVAGSRVPGRGA). A helical transmembrane segment spans residues 223–243 (PISALLSILSFLILYFSHCMI). The Extracellular portion of the chain corresponds to 244 to 257 (KVFLSSLKFHVRRF). A helical membrane pass occupies residues 258–278 (IFLFFILVIGIYPSGHSLILI). Residues 279 to 299 (LGNPKLKQNAKKFLLHSKCCQ) lie on the Cytoplasmic side of the membrane.

Belongs to the G-protein coupled receptor T2R family.

It is found in the membrane. Receptor that may play a role in the perception of bitterness and is gustducin-linked. May play a role in sensing the chemical composition of the gastrointestinal content. The activity of this receptor may stimulate alpha gustducin, mediate PLC-beta-2 activation and lead to the gating of TRPM5. The chain is Taste receptor type 2 member 1 (TAS2R1) from Pan paniscus (Pygmy chimpanzee).